We begin with the raw amino-acid sequence, 257 residues long: Thiazole synthase (257 aa).

The Schiff-base intermediate with DXP role is filled by Lys96. 1-deoxy-D-xylulose 5-phosphate contacts are provided by residues Gly157, Ala184–Gly185, and Asn206–Thr207.

The protein belongs to the ThiG family. As to quaternary structure, homotetramer. Forms heterodimers with either ThiH or ThiS.

It localises to the cytoplasm. It catalyses the reaction [ThiS sulfur-carrier protein]-C-terminal-Gly-aminoethanethioate + 2-iminoacetate + 1-deoxy-D-xylulose 5-phosphate = [ThiS sulfur-carrier protein]-C-terminal Gly-Gly + 2-[(2R,5Z)-2-carboxy-4-methylthiazol-5(2H)-ylidene]ethyl phosphate + 2 H2O + H(+). Its pathway is cofactor biosynthesis; thiamine diphosphate biosynthesis. Functionally, catalyzes the rearrangement of 1-deoxy-D-xylulose 5-phosphate (DXP) to produce the thiazole phosphate moiety of thiamine. Sulfur is provided by the thiocarboxylate moiety of the carrier protein ThiS. In vitro, sulfur can be provided by H(2)S. The protein is Thiazole synthase of Rhizobium meliloti (strain 1021) (Ensifer meliloti).